The sequence spans 373 residues: Transaldolase (373 aa).

Lysine 143 acts as the Schiff-base intermediate with substrate in catalysis.

The protein belongs to the transaldolase family. Type 2 subfamily.

It localises to the cytoplasm. The catalysed reaction is D-sedoheptulose 7-phosphate + D-glyceraldehyde 3-phosphate = D-erythrose 4-phosphate + beta-D-fructose 6-phosphate. Its pathway is carbohydrate degradation; pentose phosphate pathway; D-glyceraldehyde 3-phosphate and beta-D-fructose 6-phosphate from D-ribose 5-phosphate and D-xylulose 5-phosphate (non-oxidative stage): step 2/3. Transaldolase is important for the balance of metabolites in the pentose-phosphate pathway. This chain is Transaldolase (tal), found in Mycobacterium bovis (strain ATCC BAA-935 / AF2122/97).